Here is a 304-residue protein sequence, read N- to C-terminus: tRNA pseudouridine synthase B (304 aa).

The active-site Nucleophile is Asp38.

The protein belongs to the pseudouridine synthase TruB family. Type 1 subfamily.

The enzyme catalyses uridine(55) in tRNA = pseudouridine(55) in tRNA. In terms of biological role, responsible for synthesis of pseudouridine from uracil-55 in the psi GC loop of transfer RNAs. This is tRNA pseudouridine synthase B from Listeria monocytogenes serovar 1/2a (strain ATCC BAA-679 / EGD-e).